Here is a 247-residue protein sequence, read N- to C-terminus: Suppressor of silencing P0 (247 aa).

The 20-residue stretch at 76–95 (LPRHLHYECLEWGLLCGTHP) folds into the F-box-like domain.

This sequence belongs to the polerovirus P0 protein family.

Functionally, suppressor of RNA-mediated gene silencing, also known as post-transcriptional gene silencing (PTGS), a mechanism of plant viral defense that limits the accumulation of viral RNAs. The P0 protein suppresses local PTGS using its F-box-like domain to mediate destabilization and degradation of the AGO1 protein, although not via an interaction with host SKP1A. Participates, together with the proteins P1 and P7, in the inhibition of the induction of aphid-induced host phytohormones. This could play a role in the attraction to the infected plants by aphids. The polypeptide is Suppressor of silencing P0 (Potato leafroll virus (strain Potato/Netherlands/Wageningen/1989) (PLrV)).